The sequence spans 151 residues: Deoxyuridine 5'-triphosphate nucleotidohydrolase (151 aa).

Residues 70–72, asparagine 83, 87–89, and methionine 97 each bind substrate; these read RSG and LID.

The protein belongs to the dUTPase family. The cofactor is Mg(2+).

The enzyme catalyses dUTP + H2O = dUMP + diphosphate + H(+). The protein operates within pyrimidine metabolism; dUMP biosynthesis; dUMP from dCTP (dUTP route): step 2/2. Its function is as follows. This enzyme is involved in nucleotide metabolism: it produces dUMP, the immediate precursor of thymidine nucleotides and it decreases the intracellular concentration of dUTP so that uracil cannot be incorporated into DNA. The polypeptide is Deoxyuridine 5'-triphosphate nucleotidohydrolase (Pseudomonas paraeruginosa (strain DSM 24068 / PA7) (Pseudomonas aeruginosa (strain PA7))).